A 257-amino-acid polypeptide reads, in one-letter code: Leucine-rich repeat-containing protein 3 (257 aa).

The N-terminal stretch at Met-1–Ala-32 is a signal peptide. An LRRNT domain is found at Cys-33–Ala-64. LRR repeat units lie at residues Asn-65–His-86, Arg-89–Gly-110, Gly-114–Lys-135, and Leu-136–Leu-157. A helical membrane pass occupies residues Val-205–Tyr-225.

Belongs to the LRRC3 family. Widely expressed; detected in testis, lung, small intestine, breast, brain, heart, bone marrow, placenta, colon, fetal brain, liver, fetal liver, thymus, salivary gland, spinal cord, spleen, trachea and adrenal gland.

The protein localises to the membrane. The polypeptide is Leucine-rich repeat-containing protein 3 (LRRC3) (Homo sapiens (Human)).